We begin with the raw amino-acid sequence, 271 residues long: Keratin-associated protein 10-5 (271 aa).

22 consecutive repeat copies span residues 26–30 (CCEPP), 51–55 (CCQAA), 73–77 (CCQPA), 78–82 (CCASS), 88–92 (CCVPV), 93–97 (CCKPV), 98–102 (CCLPT), 110–114 (CCQQS), 120–124 (CCASS), 130–134 (CCVPV), 135–139 (CCKPV), 140–144 (CCVPT), 152–156 (CCQHS), 162–166 (CCTSS), 177–181 (CCKPV), 187–191 (CCVPV), 199–203 (CCQQS), 209–213 (CCTTS), 214–218 (CCRPS), 233–237 (CCLPI), 240–244 (CCAPA), and 251–255 (CCRPA). The 22 X 5 AA repeats of C-C-X(3) stretch occupies residues 26 to 255 (CCEPPCGTAP…SYQASCCRPA (230 aa)).

This sequence belongs to the KRTAP type 10 family. Interacts with hair keratins. As to expression, restricted to a narrow region of the hair fiber cuticle, lying approximately 20 cell layers above the apex of the dermal papilla of the hair root; not detected in any other tissues.

Functionally, in the hair cortex, hair keratin intermediate filaments are embedded in an interfilamentous matrix, consisting of hair keratin-associated proteins (KRTAP), which are essential for the formation of a rigid and resistant hair shaft through their extensive disulfide bond cross-linking with abundant cysteine residues of hair keratins. The matrix proteins include the high-sulfur and high-glycine-tyrosine keratins. This Homo sapiens (Human) protein is Keratin-associated protein 10-5 (KRTAP10-5).